We begin with the raw amino-acid sequence, 833 residues long: MNMEIGHPHEGKDDLGDKRVIMGTKFPMELGIRVGLGKEDSRCGESPVVSNKCEGRMAPPETKFPLSKGLEMGLERQNISRTVMQRGSLGVDSVSASQGTKPSLLPGRMGLENESLLAGYTHERIIQPPLGRVCGSSQAAGSRRAPLASGPEGVEELVGKPAFVMEPRQEMEKESTCVLMKPNTEIKLPVEVDIGLTQAEGPDETKNTEPQMGLVIEPPQCQFAQQHEQRKEAGNIESGVEPPDRIRPIYSGKFFDRTPCWPSAGKVIPVGYRVATCLTEKLPRLITPPEAKKYFNFRYPPAGVERVFYGRANDPQIAPYLTHGIRSKISVLANTLINPQPITTFQQKIKDKKESIYLSNRRAPLGKSHDQAPGLPKGMDTTNTTFGTAVIKEYSAKDVVNPPKSYEEVFKEGNEGHDLYVVSHNDYYAGEAKNRKYNPSSFHRCSVYGVPTPHFNDGRAMAKSLYWLHELQMKRGAKFVSKRADDFKEKFQHKLGRVLDPIAETMNVPPDCTFGACLRPEEYGVGDLIHNRLPDEYLRGKDRQRALIAAVRHHLKKVNYQKFDTLLAAFRHYDKKGDGMIDKDELQEACDQANLSLDDKLLDQLFDYCDVDNDGFINYLEFANFLNWKDKMLLKEYEERVIIKGRKPDCVNPTEANVEEPEQTLLIKPEDIVLKEAGSTEKTLRTLLRPSDKVSNYYKTTSSEINAIVGAIPSTCYPICGVPTIRSDIPAPRIRRISDRTNYGEEGSAYSLLYPTIFARKGVFERDFFKTRSKEEIAEILCNIGVKLSDEEFENVWNLASKKHHRGEVCVENIRNVLDELRHADRIKCKTLM.

EF-hand domains lie at 561–596 and 597–632; these read QKFDTLLAAFRHYDKKGDGMIDKDELQEACDQANLS and LDDKLLDQLFDYCDVDNDGFINYLEFANFLNWKDKM. Asp-574, Asp-578, Met-580, Glu-585, Asp-610, Asp-612, Asp-614, and Glu-621 together coordinate Ca(2+).

In terms of assembly, microtubule inner protein component of sperm flagellar doublet microtubules. Interacts with STIM1 and ORAI1; the interactions take place upon Ca(2+)-store depletion and dissociate through a Ca(2+)-dependent mechanism. Interaction with STIM1 inhibits STIM1 interaction with SARAF. In terms of tissue distribution, expressed in airway epithelial cells.

The protein resides in the cytoplasm. The protein localises to the cytoskeleton. It is found in the cilium axoneme. Its subcellular location is the flagellum axoneme. Microtubule inner protein (MIP) part of the dynein-decorated doublet microtubules (DMTs) in cilia axoneme, which is required for motile cilia beating. Cytosolic sensor for calcium, modulates the interaction of STIM1 and ORAI1 upon store depletion and the activation of store-operated Ca(2+) entry (SOCE) and NFAT translocation from cytosol to nucleus. This is EF-hand domain-containing family member B from Homo sapiens (Human).